We begin with the raw amino-acid sequence, 339 residues long: Mitogen-activated protein kinase kinase kinase 18 (339 aa).

The Protein kinase domain maps to 3–263; it reads WTRGKTLGRG…ASQLLNHPFL (261 aa). Residues 9-17 and Lys32 each bind ATP; that span reads LGRGSTATV. The active-site Proton acceptor is Asp131. Ser301 carries the phosphoserine modification.

Belongs to the protein kinase superfamily. Ser/Thr protein kinase family. In terms of assembly, interacts with ABI1. Binds to MKK3. Associates with SRK2E within the nucleus. In terms of processing, autophosphorylated. Post-translationally, unstable protein degraded by the proteasome pathway; this degradation is promoted by ABI1, but blocked by ABA. In terms of tissue distribution, expressed in roots, leaves and flowers.

The protein resides in the nucleus. The catalysed reaction is L-seryl-[protein] + ATP = O-phospho-L-seryl-[protein] + ADP + H(+). The enzyme catalyses L-threonyl-[protein] + ATP = O-phospho-L-threonyl-[protein] + ADP + H(+). Kinase activity is activated by abscisic acid (ABA). Inhibited by ABI1. Activated by SRK2E. Its function is as follows. Component of the abscisic acid (ABA) signaling pathway that acts as ABA signal transducer in the context of abiotic stresses. Triggers MPK1, MPK2, MPK7 and MPK14 activation in a MKK3-dependent manner and MPK6 activation in a MKK3-independent manner. Mediates the ABA-dependent activation of the MKK3-MPK7 module. Positive regulator of ABA responses leading to the induction of gene expression (e.g. RD29B and RAB18) and involved in various responses including stomatal development, stomatal movement, inhibition of germination and root growth. Promotes leaf senescence. The polypeptide is Mitogen-activated protein kinase kinase kinase 18 (Arabidopsis thaliana (Mouse-ear cress)).